The following is a 277-amino-acid chain: Large ribosomal subunit protein uL2c (277 aa).

The span at 1–11 shows a compositional bias: polar residues; it reads MNTRSYSTFTP. 2 disordered regions span residues 1–47 and 254–277; these read MNTR…RNNS and YSAL…RRRK.

It belongs to the universal ribosomal protein uL2 family. Part of the 50S ribosomal subunit.

It localises to the plastid. It is found in the chloroplast. This is Large ribosomal subunit protein uL2c (rpl2) from Cryptomeria japonica (Japanese cedar).